The primary structure comprises 352 residues: C-X-C chemokine receptor type 4 (352 aa).

The segment at 1–21 (MEGISIYTSDNYTEEMGSGDY) is important for chemokine binding and signaling. The Extracellular portion of the chain corresponds to 1–38 (MEGISIYTSDNYTEEMGSGDYDSIKEPCFREENAHFNR). Tyr7 bears the Sulfotyrosine mark. N-linked (GlcNAc...) asparagine glycosylation occurs at Asn11. Tyr12 bears the Sulfotyrosine mark. O-linked (Xyl...) (chondroitin sulfate) serine glycosylation occurs at Ser18. The residue at position 21 (Tyr21) is a Sulfotyrosine. 2 disulfides stabilise this stretch: Cys28–Cys274 and Cys109–Cys186. A helical membrane pass occupies residues 39-63 (IFLPTIYSIIFLTGIVGNGLVILVM). At 64-77 (GYQKKLRSMTDKYR) the chain is on the cytoplasmic side. Residues 78 to 99 (LHLSVADLLFVITLPFWAVDAV) traverse the membrane as a helical segment. The tract at residues 94 to 97 (WAVD) is chemokine binding. The Extracellular portion of the chain corresponds to 100–110 (ANWYFGNFLCK). Residues 111 to 130 (AVHVIYTVNLYSSVLILAFI) traverse the membrane as a helical segment. Residues 113–117 (HVIYT) form a chemokine binding region. The Cytoplasmic portion of the chain corresponds to 131–154 (SLDRYLAIVHATNSQRPRKLLAEK). The short motif at 133–135 (DRY) is the Important for signaling element. The segment at 135–147 (YLAIVHATNSQRP) is involved in dimerization; when bound to chemokine. A helical membrane pass occupies residues 155 to 174 (VVYVGVWIPALLLTIPDFIF). Residues 175-195 (ASVSEADDRYICDRFYPNDLW) are Extracellular-facing. Positions 186-190 (CDRFY) are chemokine binding, important for signaling. The involved in dimerization stretch occupies residues 191-210 (PNDLWVVVFQFQHIMVGLIL). A helical membrane pass occupies residues 196–216 (VVVFQFQHIMVGLILPGIVIL). The Cytoplasmic portion of the chain corresponds to 217 to 241 (SCYCIIISKLSHSKGHQKRKALKTT). A helical membrane pass occupies residues 242–261 (VILILAFFACWLPYYIGISI). Topologically, residues 262–282 (DSFILLEIIKQGCEFENTVHK) are extracellular. Residues 266 to 268 (LLE) are involved in dimerization. Residues 283-302 (WISITEALAFFHCCLNPILY) traverse the membrane as a helical segment. The Cytoplasmic segment spans residues 303–352 (AFLGAKFKTSAQHALTSVSRGSSLKILSKGKRGGHSSVSTESESSSFHSS). 2 positions are modified to phosphoserine: Ser319 and Ser321. 2 positions are modified to phosphoserine; by PKC and GRK6: Ser324 and Ser325. The tract at residues 329–352 (LSKGKRGGHSSVSTESESSSFHSS) is disordered. Ser330 is subject to Phosphoserine; by GRK6. Lys331 participates in a covalent cross-link: Glycyl lysine isopeptide (Lys-Gly) (interchain with G-Cter in ubiquitin). Low complexity predominate over residues 337-352 (HSSVSTESESSSFHSS). Ser339 bears the Phosphoserine; by GRK6 mark. A phosphoserine mark is found at Ser348 and Ser351.

Belongs to the G-protein coupled receptor 1 family. As to quaternary structure, monomer. Can form homodimers. Interacts with CD164. Interacts with ARRB2; the interaction is dependent on the C-terminal phosphorylation of CXCR4 and allows activation of MAPK1 and MAPK3. Interacts with ARR3; the interaction is dependent on the C-terminal phosphorylation of CXCR4 and modulates calcium mobilization. Interacts with RNF113A; the interaction, enhanced by CXCL12, promotes CXCR4 ubiquitination and subsequent degradation. Interacts (via the cytoplasmic C-terminal) with ITCH (via the WW domains I and II); the interaction, enhanced by CXCL12, promotes CXCR4 ubiquitination and leads to its degradation. Interacts with extracellular ubiquitin. Interacts with DBN1; this interaction is enhanced by antigenic stimulation. Following LPS binding, may form a complex with GDF5, HSP90AA1 and HSPA8. In terms of processing, phosphorylated on agonist stimulation. Rapidly phosphorylated on serine and threonine residues in the C-terminal. Phosphorylation at Ser-324 and Ser-325 leads to recruitment of ITCH, ubiquitination and protein degradation. Ubiquitinated after ligand binding, leading to its degradation. Ubiquitinated by ITCH at the cell membrane on agonist stimulation. The ubiquitin-dependent mechanism, endosomal sorting complex required for transport (ESCRT), then targets CXCR4 for lysosomal degradation. This process is dependent also on prior Ser-/Thr-phosphorylation in the C-terminal of CXCR4. Also binding of ARRB1 to STAM negatively regulates CXCR4 sorting to lysosomes though modulating ubiquitination of SFR5S. Post-translationally, sulfation is required for efficient binding of CXCL12/SDF-1alpha and promotes its dimerization. In terms of processing, O- and N-glycosylated. N-glycosylation can mask coreceptor function. The O-glycosylation chondroitin sulfate attachment does not affect interaction with CXCL12/SDF-1alpha nor its coreceptor activity.

Its subcellular location is the cell membrane. The protein resides in the cell junction. The protein localises to the early endosome. It localises to the late endosome. It is found in the lysosome. Functionally, receptor for the C-X-C chemokine CXCL12/SDF-1 that transduces a signal by increasing intracellular calcium ion levels and enhancing MAPK1/MAPK3 activation. Involved in the AKT signaling cascade. Plays a role in regulation of cell migration, e.g. during wound healing. Acts as a receptor for extracellular ubiquitin; leading to enhanced intracellular calcium ions and reduced cellular cAMP levels. Binds bacterial lipopolysaccharide (LPS) et mediates LPS-induced inflammatory response, including TNF secretion by monocytes. Involved in hematopoiesis and in cardiac ventricular septum formation. Also plays an essential role in vascularization of the gastrointestinal tract, probably by regulating vascular branching and/or remodeling processes in endothelial cells. Involved in cerebellar development. In the CNS, could mediate hippocampal-neuron survival. The chain is C-X-C chemokine receptor type 4 (CXCR4) from Papio anubis (Olive baboon).